Consider the following 599-residue polypeptide: Proline--tRNA ligase (599 aa).

This sequence belongs to the class-II aminoacyl-tRNA synthetase family. ProS type 1 subfamily. Homodimer.

It localises to the cytoplasm. It carries out the reaction tRNA(Pro) + L-proline + ATP = L-prolyl-tRNA(Pro) + AMP + diphosphate. In terms of biological role, catalyzes the attachment of proline to tRNA(Pro) in a two-step reaction: proline is first activated by ATP to form Pro-AMP and then transferred to the acceptor end of tRNA(Pro). As ProRS can inadvertently accommodate and process non-cognate amino acids such as alanine and cysteine, to avoid such errors it has two additional distinct editing activities against alanine. One activity is designated as 'pretransfer' editing and involves the tRNA(Pro)-independent hydrolysis of activated Ala-AMP. The other activity is designated 'posttransfer' editing and involves deacylation of mischarged Ala-tRNA(Pro). The misacylated Cys-tRNA(Pro) is not edited by ProRS. This is Proline--tRNA ligase from Prochlorococcus marinus (strain MIT 9303).